Reading from the N-terminus, the 133-residue chain is Large ribosomal subunit protein bL17 (133 aa).

The protein belongs to the bacterial ribosomal protein bL17 family. In terms of assembly, part of the 50S ribosomal subunit. Contacts protein L32.

The chain is Large ribosomal subunit protein bL17 from Thermodesulfovibrio yellowstonii (strain ATCC 51303 / DSM 11347 / YP87).